A 212-amino-acid chain; its full sequence is Peptide methionine sulfoxide reductase MsrA (212 aa).

C52 is an active-site residue.

The protein belongs to the MsrA Met sulfoxide reductase family.

It catalyses the reaction L-methionyl-[protein] + [thioredoxin]-disulfide + H2O = L-methionyl-(S)-S-oxide-[protein] + [thioredoxin]-dithiol. The enzyme catalyses [thioredoxin]-disulfide + L-methionine + H2O = L-methionine (S)-S-oxide + [thioredoxin]-dithiol. Has an important function as a repair enzyme for proteins that have been inactivated by oxidation. Catalyzes the reversible oxidation-reduction of methionine sulfoxide in proteins to methionine. The polypeptide is Peptide methionine sulfoxide reductase MsrA (Salmonella arizonae (strain ATCC BAA-731 / CDC346-86 / RSK2980)).